Consider the following 77-residue polypeptide: uncharacterized protein (77 aa).

2 disordered regions span residues 1–34 (MSRAYLADNDKGWAKKKGADSHATPRPHKQTKMN) and 56–77 (LDGDIRRGGNKKSERVSGFSGR). Basic and acidic residues predominate over residues 8 to 20 (DNDKGWAKKKGAD). Positions 25-34 (PRPHKQTKMN) are enriched in basic residues. Over residues 56–70 (LDGDIRRGGNKKSER) the composition is skewed to basic and acidic residues.

This is an uncharacterized protein from Dictyostelium discoideum (Social amoeba).